Reading from the N-terminus, the 497-residue chain is MSIPGLGQIAPQQPTTSTTRTITLRPFWEWRFEVPRSSIPTTNAAISAIGLGGAGAGGGGATVRLTSGTAERDGTELALNRTYTFPRNTQSKLLTYTGATLEVSGAFVDSVAQYPAPEASPQLPVLNLHFALQELRAAAAAGGSNHNNNNTNGGGAPGPRVMICGEKDSGKTTVARTLAALATRAGGQPLVGSVDPREGMLALPGTVSAAVFGTVMDVEDPAAGFGVSGTPSSGPSAVPVKLPMVYYVGRERVDEDVPLWRDLVGKLGSAVRDKFAADEVVREAGLLLDTPAASVAKGDLEVLTHVVNEFAGGLLGAGRTAGWQLTVTVNIVVVLGSVDLHAELQRRFENQRTVHGEAITLILLDKSDGVAERDKDFMKFTREAAIKEYFFGDAKRTLSPFTQSVSFDDVAVFRTPDALERAEVSAEMSHWTLAVMNASVNDPPEVIRQAPVMGFVAIADVDEDRRRLKVLSPVSGRLGNRPMIWGRWPEPYINLLG.

Residues 1–20 (MSIPGLGQIAPQQPTTSTTR) form a disordered region. Residues Glu29 and 168–173 (DSGKTT) each bind ATP.

The protein belongs to the Clp1 family. Clp1 subfamily. Component of a pre-mRNA cleavage factor complex. Interacts directly with PCF11.

The protein localises to the nucleus. Required for endonucleolytic cleavage during polyadenylation-dependent pre-mRNA 3'-end formation. This Chaetomium globosum (strain ATCC 6205 / CBS 148.51 / DSM 1962 / NBRC 6347 / NRRL 1970) (Soil fungus) protein is mRNA cleavage and polyadenylation factor CLP1.